The sequence spans 316 residues: Uracil-DNA glycosylase (316 aa).

Over residues 36 to 79 (AAAAAPAGAGAGASKPARPSAAARPAKGTPAASAATTATGADAS) the composition is skewed to low complexity. The disordered stretch occupies residues 36 to 91 (AAAAAPAGAGAGASKPARPSAAARPAKGTPAASAATTATGADASAPPPDPGAPTWD). The Proton acceptor role is filled by Asp-159.

The protein belongs to the uracil-DNA glycosylase (UDG) superfamily. UNG family.

The protein localises to the host nucleus. The enzyme catalyses Hydrolyzes single-stranded DNA or mismatched double-stranded DNA and polynucleotides, releasing free uracil.. Functionally, excises uracil residues from the DNA which can arise as a result of misincorporation of dUMP residues by DNA polymerase or deamination of cytosines. Therefore may reduce deleterious uracil incorporation into the viral genome, particularly in terminally differentiated cells which lack DNA repair enzymes. The protein is Uracil-DNA glycosylase (UL2) of Sus scrofa (Pig).